The primary structure comprises 374 residues: Aminodeoxychorismate lyase (374 aa).

This sequence belongs to the class-IV pyridoxal-phosphate-dependent aminotransferase family. In terms of assembly, homodimer. Requires pyridoxal 5'-phosphate as cofactor.

It is found in the cytoplasm. The catalysed reaction is 4-amino-4-deoxychorismate = 4-aminobenzoate + pyruvate + H(+). The protein operates within cofactor biosynthesis; tetrahydrofolate biosynthesis; 4-aminobenzoate from chorismate: step 2/2. Functionally, converts 4-amino-4-deoxychorismate into 4-aminobenzoate (PABA) and pyruvate. In Saccharomyces cerevisiae (strain ATCC 204508 / S288c) (Baker's yeast), this protein is Aminodeoxychorismate lyase (ABZ2).